Reading from the N-terminus, the 481-residue chain is Leukocyte immunoglobulin-like receptor subfamily A member 6 (481 aa).

The signal sequence occupies residues 1–23 (MTPALTALLCLGLSLGPRTHVQA). The Ig-like C2-type 1 domain maps to 24–118 (GPLPKPTLWA…PSDPLELVVT (95 aa)). Over 24–447 (GPLPKPTLWA…SHAKDYTVEN (424 aa)) the chain is Extracellular. A disulfide bridge links Cys49 with Cys98. Asn139 carries N-linked (GlcNAc...) asparagine glycosylation. 2 cysteine pairs are disulfide-bonded: Cys144–Cys196 and Cys245–Cys296. Ig-like C2-type domains follow at residues 225–314 (PSLL…DPLN) and 323–408 (DRVS…HLLS). Residues Asn301 and Asn340 are each glycosylated (N-linked (GlcNAc...) asparagine). Residues Cys345 and Cys396 are joined by a disulfide bond. Positions 418–439 (VSGPSGGPSLPPTGPPSTPASH) are disordered. The span at 426-435 (SLPPTGPPST) shows a compositional bias: pro residues. A helical transmembrane segment spans residues 448–468 (LIRMGMAGLVLVVLGILLFEA). Topologically, residues 469–481 (QHSQRSPQDAARR) are cytoplasmic.

It is found in the membrane. Functionally, may act as receptor for class I MHC antigens. The polypeptide is Leukocyte immunoglobulin-like receptor subfamily A member 6 (LILRA6) (Pan troglodytes (Chimpanzee)).